Reading from the N-terminus, the 898-residue chain is Chaperone protein ClpB 1 (898 aa).

The Clp R domain maps to 6 to 148 (PTKFTEQAWD…ELAIKAIRGS (143 aa)). Repeat stretches follow at residues 9-74 (FTEQ…TNRQ) and 85-148 (LGRS…IRGS). The NBD1 stretch occupies residues 161-344 (EALDKYGRDL…RRFQQVYVKQ (184 aa)). 208–215 (GEPGVGKT) is a binding site for ATP. Residues 345 to 560 (PSVDDTISIL…IAEIVAGWTG (216 aa)) form a linker region. The stretch at 395–536 (IDLVDEAAAR…KESKLLEIQG (142 aa)) forms a coiled coil. The segment at 570–781 (ERQKLLQLEG…RIDDLIIFHT (212 aa)) is NBD2. 620 to 627 (GPTGVGKT) lines the ATP pocket. The tract at residues 782-898 (LKRDELRRIV…TAVEVEVLSS (117 aa)) is C-terminal.

It belongs to the ClpA/ClpB family. As to quaternary structure, homohexamer. The oligomerization is ATP-dependent.

It is found in the cytoplasm. In terms of biological role, part of a stress-induced multi-chaperone system, it is involved in the recovery of the cell from heat-induced damage, in cooperation with DnaK, DnaJ and GrpE. Acts before DnaK, in the processing of protein aggregates. Protein binding stimulates the ATPase activity; ATP hydrolysis unfolds the denatured protein aggregates, which probably helps expose new hydrophobic binding sites on the surface of ClpB-bound aggregates, contributing to the solubilization and refolding of denatured protein aggregates by DnaK. The protein is Chaperone protein ClpB 1 (clpB1) of Synechocystis sp. (strain ATCC 27184 / PCC 6803 / Kazusa).